Here is a 418-residue protein sequence, read N- to C-terminus: Gamma-glutamyl phosphate reductase (418 aa).

Belongs to the gamma-glutamyl phosphate reductase family.

The protein resides in the cytoplasm. The enzyme catalyses L-glutamate 5-semialdehyde + phosphate + NADP(+) = L-glutamyl 5-phosphate + NADPH + H(+). Its pathway is amino-acid biosynthesis; L-proline biosynthesis; L-glutamate 5-semialdehyde from L-glutamate: step 2/2. In terms of biological role, catalyzes the NADPH-dependent reduction of L-glutamate 5-phosphate into L-glutamate 5-semialdehyde and phosphate. The product spontaneously undergoes cyclization to form 1-pyrroline-5-carboxylate. This Dechloromonas aromatica (strain RCB) protein is Gamma-glutamyl phosphate reductase.